We begin with the raw amino-acid sequence, 376 residues long: 23S rRNA (uracil(747)-C(5))-methyltransferase RlmC (376 aa).

Residues Cys3, Cys11, Cys14, and Cys87 each contribute to the [4Fe-4S] cluster site. 4 residues coordinate S-adenosyl-L-methionine: Gln212, Phe241, Glu262, and Asn307. Catalysis depends on Cys334, which acts as the Nucleophile.

It belongs to the class I-like SAM-binding methyltransferase superfamily. RNA M5U methyltransferase family. RlmC subfamily.

It carries out the reaction uridine(747) in 23S rRNA + S-adenosyl-L-methionine = 5-methyluridine(747) in 23S rRNA + S-adenosyl-L-homocysteine + H(+). Functionally, catalyzes the formation of 5-methyl-uridine at position 747 (m5U747) in 23S rRNA. This is 23S rRNA (uracil(747)-C(5))-methyltransferase RlmC from Salmonella typhimurium (strain LT2 / SGSC1412 / ATCC 700720).